The sequence spans 611 residues: Chaperone protein HtpG (611 aa).

Residues 1–326 (MSETLERHAF…TEDLPLNVSR (326 aa)) are a; substrate-binding. The interval 327 to 536 (EMLQATPVLA…SGGPDLQMQR (210 aa)) is b. The interval 537–611 (LLRRAGRGFG…RVATALAAQG (75 aa)) is c.

Belongs to the heat shock protein 90 family. In terms of assembly, homodimer.

The protein localises to the cytoplasm. Functionally, molecular chaperone. Has ATPase activity. The protein is Chaperone protein HtpG of Methylobacterium nodulans (strain LMG 21967 / CNCM I-2342 / ORS 2060).